The sequence spans 810 residues: Chloride channel protein (810 aa).

Over 2-48 (SHEKNEASGNPEAQSWKAQEAMLGVKTEVSRWRAVKNCLYRHLVKVL) the chain is Cytoplasmic. 2 helical membrane passes run 49-86 (GEDW…LFAM) and 93-116 (LQYL…CQIV). A Selectivity filter part_1 motif is present at residues 122-126 (GSGIP). Residue Ser-123 coordinates chloride. Positions 125 to 132 (IPELKTII) form an intramembrane region, helical. A run of 2 helical transmembrane segments spans residues 141-160 (LTLR…LSAG) and 166-184 (EGPF…NQLL). Residues 164–168 (GKEGP) carry the Selectivity filter part_2 motif. Intramembrane regions (helical) lie at residues 201–213 (ILTV…ISCC) and 217–225 (PLAGVLFSI). The next 3 helical transmembrane spans lie at 237–254 (YWRG…FRVL), 283–311 (LPAF…IVFM), and 320–339 (ILKK…LATL). N-linked (GlcNAc...) asparagine glycosylation occurs at Asn-365. Transmembrane regions (helical) follow at residues 389 to 408 (NIFI…AALA) and 416 to 439 (GAFV…MALL). The Selectivity filter part_3 signature appears at 416–420 (GAFVP). Position 418 (Phe-418) interacts with chloride. Residues 456–470 (GEYAVIGAAAMTGAV) constitute an intramembrane region (helical). An intramembrane region (note=Loop between two helices) is located at residues 471 to 472 (TH). Residues 473 to 484 (AVSTAVICFELT) constitute an intramembrane region (helical). Residues 485 to 489 (GQISH) constitute an intramembrane region (note=Loop between two helices). A helical membrane pass occupies residues 490 to 506 (VLPMMVAVILANMVAQG). Over 507-810 (LQPSLYDSII…RTATSNSSGK (304 aa)) the chain is Cytoplasmic. Tyr-512 contacts chloride. In terms of domain architecture, CBS 1 spans 543–601 (MVRDVTSIASTSTYGDLLHVLRQTKLKFFPFVDTPETNTLLGSIERTEVEGLLQRRISA). Disordered stretches follow at residues 604 to 631 (RQPA…DVPG) and 658 to 688 (KVQT…KHKG). The CBS 2 domain occupies 724–781 (IDQSPFQLVEGTSLQKTHTLFSLLGLDRAYVTSMGKLVGVVALAEIQAAIEGSYQKGF).

The protein belongs to the chloride channel (TC 2.A.49) family. ClC-0 subfamily. As to quaternary structure, homodimer. Each subunit has channel activity ('Double barreled channel').

The protein localises to the membrane. Voltage-gated chloride channel. This channel is thought to ensure the high conductance of the non-innervated membrane of the electrocyte necessary for efficient current generation caused by sodium influx through the acetylcholine receptor at the innervated membrane. The protein is Chloride channel protein of Tetronarce californica (Pacific electric ray).